A 306-amino-acid polypeptide reads, in one-letter code: D-alanine--D-alanine ligase B (306 aa).

Positions 101 to 303 (KLLWQGAGLP…FSQLVVRILE (203 aa)) constitute an ATP-grasp domain. Residue 134–189 (ISALGLPVIVKPSREGSSVGMSKVVAENALQDALRLAFQHDEEVLIEKWLSGPEFT) coordinates ATP. 3 residues coordinate Mg(2+): aspartate 257, glutamate 270, and asparagine 272.

This sequence belongs to the D-alanine--D-alanine ligase family. Requires Mg(2+) as cofactor. Mn(2+) serves as cofactor.

The protein resides in the cytoplasm. The catalysed reaction is 2 D-alanine + ATP = D-alanyl-D-alanine + ADP + phosphate + H(+). It participates in cell wall biogenesis; peptidoglycan biosynthesis. In terms of biological role, cell wall formation. The protein is D-alanine--D-alanine ligase B of Shigella flexneri.